Reading from the N-terminus, the 86-residue chain is Large ribosomal subunit protein bL31B (86 aa).

The protein belongs to the bacterial ribosomal protein bL31 family. Type B subfamily. In terms of assembly, part of the 50S ribosomal subunit.

The chain is Large ribosomal subunit protein bL31B from Vibrio parahaemolyticus serotype O3:K6 (strain RIMD 2210633).